The sequence spans 202 residues: Crossover junction endodeoxyribonuclease RuvC (202 aa).

Active-site residues include Asp-7, Glu-68, and Asp-141. The Mg(2+) site is built by Asp-7, Glu-68, and Asp-141.

The protein belongs to the RuvC family. As to quaternary structure, homodimer which binds Holliday junction (HJ) DNA. The HJ becomes 2-fold symmetrical on binding to RuvC with unstacked arms; it has a different conformation from HJ DNA in complex with RuvA. In the full resolvosome a probable DNA-RuvA(4)-RuvB(12)-RuvC(2) complex forms which resolves the HJ. Requires Mg(2+) as cofactor.

It localises to the cytoplasm. The enzyme catalyses Endonucleolytic cleavage at a junction such as a reciprocal single-stranded crossover between two homologous DNA duplexes (Holliday junction).. The RuvA-RuvB-RuvC complex processes Holliday junction (HJ) DNA during genetic recombination and DNA repair. Endonuclease that resolves HJ intermediates. Cleaves cruciform DNA by making single-stranded nicks across the HJ at symmetrical positions within the homologous arms, yielding a 5'-phosphate and a 3'-hydroxyl group; requires a central core of homology in the junction. The consensus cleavage sequence is 5'-(A/T)TT(C/G)-3'. Cleavage occurs on the 3'-side of the TT dinucleotide at the point of strand exchange. HJ branch migration catalyzed by RuvA-RuvB allows RuvC to scan DNA until it finds its consensus sequence, where it cleaves and resolves the cruciform DNA. The protein is Crossover junction endodeoxyribonuclease RuvC of Clavibacter michiganensis subsp. michiganensis (strain NCPPB 382).